We begin with the raw amino-acid sequence, 124 residues long: Large ribosomal subunit protein uL22 (124 aa).

It belongs to the universal ribosomal protein uL22 family. Part of the 50S ribosomal subunit.

Functionally, this protein binds specifically to 23S rRNA; its binding is stimulated by other ribosomal proteins, e.g. L4, L17, and L20. It is important during the early stages of 50S assembly. It makes multiple contacts with different domains of the 23S rRNA in the assembled 50S subunit and ribosome. The globular domain of the protein is located near the polypeptide exit tunnel on the outside of the subunit, while an extended beta-hairpin is found that lines the wall of the exit tunnel in the center of the 70S ribosome. The polypeptide is Large ribosomal subunit protein uL22 (Treponema pallidum (strain Nichols)).